Reading from the N-terminus, the 359-residue chain is 1-deoxy-D-xylulose 5-phosphate reductoisomerase (359 aa).

7 residues coordinate NADPH: Thr7, Gly8, Ser9, Ile10, Ala31, Asn33, and Asn111. Lys112 serves as a coordination point for 1-deoxy-D-xylulose 5-phosphate. Position 113 (Glu113) interacts with NADPH. Residue Asp131 participates in Mn(2+) binding. Residues Ser132, Glu133, Ser155, and His178 each coordinate 1-deoxy-D-xylulose 5-phosphate. Glu133 serves as a coordination point for Mn(2+). Residue Gly184 participates in NADPH binding. Positions 191, 196, 197, and 200 each coordinate 1-deoxy-D-xylulose 5-phosphate. Residue Glu200 coordinates Mn(2+).

It belongs to the DXR family. The cofactor is Mg(2+). Mn(2+) is required as a cofactor.

It carries out the reaction 2-C-methyl-D-erythritol 4-phosphate + NADP(+) = 1-deoxy-D-xylulose 5-phosphate + NADPH + H(+). The protein operates within isoprenoid biosynthesis; isopentenyl diphosphate biosynthesis via DXP pathway; isopentenyl diphosphate from 1-deoxy-D-xylulose 5-phosphate: step 1/6. Its function is as follows. Catalyzes the NADPH-dependent rearrangement and reduction of 1-deoxy-D-xylulose-5-phosphate (DXP) to 2-C-methyl-D-erythritol 4-phosphate (MEP). The protein is 1-deoxy-D-xylulose 5-phosphate reductoisomerase of Campylobacter hominis (strain ATCC BAA-381 / DSM 21671 / CCUG 45161 / LMG 19568 / NCTC 13146 / CH001A).